A 1426-amino-acid chain; its full sequence is A disintegrin and metalloproteinase with thrombospondin motifs 13 (1426 aa).

A signal peptide spans 1-33; sequence MSQLCLWLTCQPCYAVSVRGILTGAIFILGCWG. Residues 34 to 76 constitute a propeptide that is removed on maturation; sequence LSDFQKSLLQDLEPKDVSSYFGHHAAPFTGHPPSHLQRLRRRR. Residues 74-291 enclose the Peptidase M12B domain; it reads RRRTLEDILH…GQMHCFQDPP (218 aa). Position 85 (glutamate 85) interacts with Ca(2+). N-linked (GlcNAc...) asparagine glycans are attached at residues asparagine 144 and asparagine 148. 3 disulfide bridges follow: cysteine 157/cysteine 210, cysteine 204/cysteine 286, and cysteine 246/cysteine 270. Ca(2+) contacts are provided by aspartate 175, aspartate 184, glutamate 186, aspartate 189, and glutamate 214. Histidine 226 provides a ligand contact to Zn(2+). Glutamate 227 is a catalytic residue. Residues histidine 230 and histidine 236 each contribute to the Zn(2+) site. 2 residues coordinate Ca(2+): threonine 281 and aspartate 289. One can recognise a Disintegrin domain in the interval 295–388; sequence SGLTRHQLMA…LAELAPVAAV (94 aa). 11 cysteine pairs are disulfide-bonded: cysteine 316-cysteine 342, cysteine 327-cysteine 352, cysteine 337-cysteine 371, cysteine 365-cysteine 376, cysteine 401-cysteine 438, cysteine 405-cysteine 443, cysteine 416-cysteine 428, cysteine 488-cysteine 527, cysteine 513-cysteine 532, cysteine 537-cysteine 553, and cysteine 550-cysteine 560. Residues 389–444 enclose the TSP type-1 1 domain; sequence HGHWSSWGPHSPCSRSCGGGVITRRRWCNNPRPAFGGRACVGEDLQAKMCNTQACE. The segment at 445–561 is cysteine-rich; sequence KTQLEFMSEQ…VCGGDNSTCS (117 aa). Positions 503 to 505 match the Cell attachment site motif; it reads RGD. The spacer stretch occupies residues 556 to 685; sequence DNSTCSSRNG…PDITFSYFQL (130 aa). Asparagine 557, asparagine 564, asparagine 584, and asparagine 619 each carry an N-linked (GlcNAc...) asparagine glycan. TSP type-1 domains follow at residues 687–746, 747–810, 808–871, 904–957, 958–1019, 1020–1078, and 1079–1137; these read QQAA…VSAP, CSPY…QPCP, PCPT…SLCS, WTPL…RARP, CPAR…EPCP, ARWK…IADC, and AFRW…GPCA. O-linked (Fuc...) serine glycans are attached at residues serine 703 and serine 762. Asparagine 834 carries N-linked (GlcNAc...) asparagine glycosylation. Residue serine 914 is glycosylated (O-linked (Fuc...) serine). Threonine 973 carries O-linked (Fuc...) threonine glycosylation. Serine 1033 carries an O-linked (Fuc...) serine glycan. Asparagine 1057 carries an N-linked (GlcNAc...) asparagine glycan. Serine 1093 carries O-linked (Fuc...) serine glycosylation. CUB domains lie at 1195–1302 and 1293–1426; these read ACGR…FYKE and QPAP…LALS.

It depends on Zn(2+) as a cofactor. The cofactor is Ca(2+). The precursor is processed by a furin endopeptidase which cleaves off the pro-domain. In terms of processing, O-glycosylated. O-fucosylated by POFUT2 on a serine or a threonine residue found within the consensus sequence C1-X(2)-(S/T)-C2-G of the TSP type-1 repeat domains where C1 and C2 are the first and second cysteine residue of the repeat, respectively. Fucosylated repeats can then be further glycosylated by the addition of a beta-1,3-glucose residue by the glucosyltransferase, B3GALTL. Fucosylation mediates the efficient secretion of ADAMTS13. May also be C-glycosylated on tryptophan residues within the consensus sequence W-X-X-W of the TPRs, and also N-glycosylated. These other glycosylations can also facilitate secretion. As to expression, plasma. Expression is consistently high in liver, medium in lung and spleen, low in skeletal muscle and undetectable in heart, brain, kidney and testis.

Its subcellular location is the secreted. It catalyses the reaction The enzyme cleaves the von Willebrand factor at bond 842-Tyr-|-Met-843 within the A2 domain.. Its activity is regulated as follows. Zinc and calcium ions cooperatively modulate enzyme activity. The cleavage of the pro-domain is not required for protease activity. Dependence on calcium for proteolytic activity is mediated by the high affinity site. Cleaves the vWF multimers in plasma into smaller forms thereby controlling vWF-mediated platelet thrombus formation. This Mus musculus (Mouse) protein is A disintegrin and metalloproteinase with thrombospondin motifs 13 (Adamts13).